A 220-amino-acid polypeptide reads, in one-letter code: Probable GTP-binding protein EngB (220 aa).

The 179-residue stretch at 41-219 folds into the EngB-type G domain; the sequence is DRSEVCFAGR…RAEIAALAML (179 aa). Residues 49-56, 76-80, 96-99, 164-167, and 197-200 contribute to the GTP site; these read GRSNVGKS, GRTRE, DLPG, TKVD, and MTSA. Mg(2+) is bound by residues serine 56 and threonine 78.

The protein belongs to the TRAFAC class TrmE-Era-EngA-EngB-Septin-like GTPase superfamily. EngB GTPase family. Mg(2+) is required as a cofactor.

Its function is as follows. Necessary for normal cell division and for the maintenance of normal septation. The polypeptide is Probable GTP-binding protein EngB (Hyphomonas neptunium (strain ATCC 15444)).